The primary structure comprises 122 residues: Defensin-like protein 181 (122 aa).

Residues 1–26 form the signal peptide; the sequence is MERIPSLASLVSLLIIFATVVNQTRA. Intrachain disulfides connect cysteine 29–cysteine 70, cysteine 36–cysteine 55, cysteine 39–cysteine 64, cysteine 43–cysteine 66, cysteine 76–cysteine 122, cysteine 87–cysteine 107, cysteine 92–cysteine 116, and cysteine 96–cysteine 118.

The protein belongs to the DEFL family.

It is found in the secreted. In terms of biological role, confers broad-spectrum resistance to pathogens. The chain is Defensin-like protein 181 (PDF3.1) from Arabidopsis thaliana (Mouse-ear cress).